Here is a 151-residue protein sequence, read N- to C-terminus: Multiprotein-bridging factor 1 (151 aa).

Disordered regions lie at residues 1–29 (MSDWDTNTIIGSRARAGGSGPRANVARSQ) and 78–98 (DPNVGRAISRARTDKKMSQKD). An essential for TBP-binding region spans residues 41-119 (VVSVDKKYGS…VNDYEAARAI (79 aa)). The region spanning 85–139 (ISRARTDKKMSQKDLATKINEKPTVVNDYEAARAIPNQQVLSKLERALGVKLRGN) is the HTH cro/C1-type domain. A compositionally biased stretch (basic and acidic residues) spans 88 to 98 (ARTDKKMSQKD). Residues 96 to 115 (QKDLATKINEKPTVVNDYEA) constitute a DNA-binding region (H-T-H motif). Serine 143 bears the Phosphoserine mark.

Belongs to the MBF1 family. Interacts with TBP and the transcription factor GCN4. Interacts with RPS3/us3.

It localises to the cytoplasm. It is found in the nucleus. Functionally, transcriptional coactivator that stimulates GCN4-dependent transcriptional activity by bridging the DNA-binding region of GCN4 and TBP (SPT15), thereby recruiting TBP to GCN4-bound promoters. Involved in induction of the ribosome quality control (RQC) pathway; a pathway that degrades nascent peptide chains during problematic translation. Required to prevent stalled ribosomes from frameshifting. In Saccharomyces cerevisiae (strain ATCC 204508 / S288c) (Baker's yeast), this protein is Multiprotein-bridging factor 1 (MBF1).